An 881-amino-acid chain; its full sequence is Sodium/sulfate cotransporter 1 (881 aa).

6 consecutive transmembrane segments (helical) span residues 8 to 28, 31 to 51, 61 to 81, 107 to 127, 140 to 160, and 186 to 206; these read GIVA…DWVG, ITFT…VTVA, GLLT…TGGL, MVLS…PILI, LLIP…IGTS, and IFDI…FILL. RCK C-terminal domains lie at 212 to 296, 318 to 402, 407 to 492, and 498 to 584; these read LPGN…EYGL, VFSA…IKTN, LHAV…FPGL, and EQVD…DKSF. Transmembrane regions (helical) follow at residues 601 to 621, 625 to 645, 658 to 678, 684 to 704, 775 to 795, and 803 to 823; these read MIIG…GGLK, YIHL…TGCM, VYLT…TGVA, AIIS…AIYI, FAIV…FILV, and VWIV…LYFL. Positions 854-881 are disordered; that stretch reads SLRRQVSHTRTDDSGSSGSPLPAPKIVA.

This sequence belongs to the divalent anion:Na+ symporter (DASS) superfamily. Na+/sulfate symporter (TC 2.A.47.4) family.

Its subcellular location is the cell membrane. Its function is as follows. Na(+)/sulfate cotransporter with a probable high-affinity for sulfate and a proteasome dependent turnover. This Chlamydomonas reinhardtii (Chlamydomonas smithii) protein is Sodium/sulfate cotransporter 1 (SLT1).